A 346-amino-acid chain; its full sequence is Putative aminopeptidase YhfE (346 aa).

A divalent metal cation contacts are provided by H68 and D185. Residue E219 is the Proton acceptor of the active site. Residues E220, D240, and H320 each contribute to the a divalent metal cation site.

This sequence belongs to the peptidase M42 family. The cofactor is a divalent metal cation.

The chain is Putative aminopeptidase YhfE (yhfE) from Bacillus subtilis (strain 168).